Here is a 436-residue protein sequence, read N- to C-terminus: Enolase (436 aa).

Gln-167 serves as a coordination point for (2R)-2-phosphoglycerate. Glu-209 (proton donor) is an active-site residue. Mg(2+)-binding residues include Asp-246, Glu-291, and Asp-318. Lys-343, Arg-372, Ser-373, and Lys-394 together coordinate (2R)-2-phosphoglycerate. Lys-343 acts as the Proton acceptor in catalysis.

It belongs to the enolase family. Component of the RNA degradosome, a multiprotein complex involved in RNA processing and mRNA degradation. The cofactor is Mg(2+).

Its subcellular location is the cytoplasm. It is found in the secreted. The protein localises to the cell surface. It catalyses the reaction (2R)-2-phosphoglycerate = phosphoenolpyruvate + H2O. It functions in the pathway carbohydrate degradation; glycolysis; pyruvate from D-glyceraldehyde 3-phosphate: step 4/5. In terms of biological role, catalyzes the reversible conversion of 2-phosphoglycerate (2-PG) into phosphoenolpyruvate (PEP). It is essential for the degradation of carbohydrates via glycolysis. This Glaesserella parasuis serovar 5 (strain SH0165) (Haemophilus parasuis) protein is Enolase.